We begin with the raw amino-acid sequence, 228 residues long: Heptaprenylglyceryl phosphate synthase (228 aa).

Lys12 contributes to the sn-glycerol 1-phosphate binding site. 2 residues coordinate Mg(2+): Asp14 and Ser40. Sn-glycerol 1-phosphate is bound by residues 159–164 (YLEYSG), Gly189, and 209–210 (GN).

This sequence belongs to the GGGP/HepGP synthase family. Group I subfamily. Homodimer. The cofactor is Mg(2+).

The catalysed reaction is sn-glycerol 1-phosphate + all-trans-heptaprenyl diphosphate = 3-heptaprenyl-sn-glycero-1-phosphate + diphosphate. It functions in the pathway membrane lipid metabolism; glycerophospholipid metabolism. Its function is as follows. Prenyltransferase that catalyzes in vivo the transfer of the heptaprenyl moiety of heptaprenyl pyrophosphate (HepPP; 35 carbon atoms) to the C3 hydroxyl of sn-glycerol-1-phosphate (G1P), producing heptaprenylglyceryl phosphate (HepGP). This reaction is an ether-bond-formation step in the biosynthesis of archaea-type G1P-based membrane lipids found in Bacillales. In Bacillus licheniformis (strain ATCC 14580 / DSM 13 / JCM 2505 / CCUG 7422 / NBRC 12200 / NCIMB 9375 / NCTC 10341 / NRRL NRS-1264 / Gibson 46), this protein is Heptaprenylglyceryl phosphate synthase.